The chain runs to 64 residues: Putative antitoxin VapB51 (64 aa).

In terms of biological role, possibly the antitoxin component of a type II toxin-antitoxin (TA) system. Its cognate toxin is VapC51. This chain is Putative antitoxin VapB51, found in Mycobacterium tuberculosis (strain ATCC 25618 / H37Rv).